We begin with the raw amino-acid sequence, 98 residues long: Small ribosomal subunit protein bS20 (98 aa).

It belongs to the bacterial ribosomal protein bS20 family.

Functionally, binds directly to 16S ribosomal RNA. The sequence is that of Small ribosomal subunit protein bS20 from Prochlorococcus marinus (strain NATL1A).